The primary structure comprises 281 residues: Leukocyte antigen CD37 (281 aa).

Residues 1–17 (MSAQESCLSLIKYFLFV) lie on the Cytoplasmic side of the membrane. Residues 18–38 (FNLFFFVLGGLIFCFGTWILI) traverse the membrane as a helical segment. Residues 39-59 (DKTSFVSFVGLSFVPLQTWSK) are Extracellular-facing. Residues 60–74 (VLAVSGVLTMALALL) traverse the membrane as a helical segment. The Cytoplasmic portion of the chain corresponds to 75–85 (GCVGALKELRC). A helical membrane pass occupies residues 86-111 (LLGLYFGMLLLLFATQITLGILISTQ). At 112–241 (RVRLERRVQE…QSLQKWLHNN (130 aa)) the chain is on the extracellular side. 3 N-linked (GlcNAc...) asparagine glycosylation sites follow: N170, N183, and N188. Residues 242-266 (IISIVGICLGVGLLELGFMTLSIFL) form a helical membrane-spanning segment. Topologically, residues 267 to 281 (CRNLDHVYDRLARYR) are cytoplasmic.

It belongs to the tetraspanin (TM4SF) family. Interacts with SCIMP. Interacts with SOCS3. Interacts with DECTIN1/CLEC7A. In terms of processing, tyrosine phosphorylated; leading to activation of downstream signaling pathways.

It localises to the cell membrane. Its function is as follows. Structural component of specialized membrane microdomains known as tetraspanin-enriched microdomains (TERMs), which act as platforms for receptor clustering and signaling. Participates thereby in diverse biological functions such as cell signal transduction, adhesion, migration and protein trafficking. Upon ligand binding, two signaling pathways are activated, one acting through phosphorylation by LYN leading to cell death or a survival pathway with activation of GSK3B. Plays an essential role for clustering of integrin ITGA4/ITGB1 and promotes its mobility in the plasma membrane of B-cells. In turn, participates in ITGA4/ITGB1 integrin-mediated antiapoptotic signaling through AKT. Also plays a role in the migration of dendritic cells and neutrophils to draining lymph nodes, as well as in their integrin-mediated adhesion. Negatively regulates IL-6 responses through direct interaction with SOCS3 thereby preventing constitutive IL-6 signaling. Alternatively, inhibition of IL-6 signaling can also occur via interaction and stabilization of DECTIN1/CLEC7A at the cell membrane to inhibit its ability to promote the production of IL-6. This chain is Leukocyte antigen CD37 (Cd37), found in Mus musculus (Mouse).